The sequence spans 533 residues: Undecaprenyl phosphate-alpha-4-amino-4-deoxy-L-arabinose arabinosyl transferase (533 aa).

The next 13 helical transmembrane spans lie at Leu10–Ile30, Pro64–Val84, Ile86–Ile106, Ser113–Ser133, Pro137–Ile157, Val170–Ile190, Phe207–His227, Trp257–Val277, Asp290–Gly310, Leu312–Val332, Val345–Gln365, His377–Ile397, and Phe402–Pro422.

This sequence belongs to the glycosyltransferase 83 family.

The protein localises to the cell inner membrane. It catalyses the reaction 4-amino-4-deoxy-alpha-L-arabinopyranosyl di-trans,octa-cis-undecaprenyl phosphate + lipid IVA = lipid IIA + di-trans,octa-cis-undecaprenyl phosphate.. It participates in lipopolysaccharide metabolism; 4-amino-4-deoxy-beta-L-arabinose-lipid A biosynthesis. In terms of biological role, catalyzes the transfer of the L-Ara4N moiety of the glycolipid undecaprenyl phosphate-alpha-L-Ara4N to lipid A. The modified arabinose is attached to lipid A and is required for resistance to polymyxin and cationic antimicrobial peptides. The sequence is that of Undecaprenyl phosphate-alpha-4-amino-4-deoxy-L-arabinose arabinosyl transferase from Pseudomonas savastanoi pv. phaseolicola (strain 1448A / Race 6) (Pseudomonas syringae pv. phaseolicola (strain 1448A / Race 6)).